Here is a 427-residue protein sequence, read N- to C-terminus: Protein phosphatase methylesterase 1 (427 aa).

Positions 1-49 (MSELQKSFAKAKLAKLPPEAPPFSMHPPRDEDDSESASSTGTVVPSPSR) are disordered. Over residues 36–49 (SASSTGTVVPSPSR) the composition is skewed to polar residues. Catalysis depends on residues serine 207, aspartate 233, and histidine 364. The tract at residues 402–427 (SAAMKQGAEAGAVPPFGRGQGSSHKP) is disordered.

This sequence belongs to the AB hydrolase superfamily.

It catalyses the reaction [phosphatase 2A protein]-C-terminal L-leucine methyl ester + H2O = [phosphatase 2A protein]-C-terminal L-leucine + methanol + H(+). Functionally, demethylates proteins that have been reversibly carboxymethylated. Demethylates the phosphatase PP2A catalytic subunit. This chain is Protein phosphatase methylesterase 1 (ppe1), found in Aspergillus oryzae (strain ATCC 42149 / RIB 40) (Yellow koji mold).